A 414-amino-acid polypeptide reads, in one-letter code: Probable indole-3-pyruvate monooxygenase YUCCA1 (414 aa).

Residue 25–30 participates in FAD binding; the sequence is GAGPSG. 189 to 194 is an NADP(+) binding site; that stretch reads GCGNSG.

The protein belongs to the FMO family. FAD serves as cofactor. Expressed in the apical meristems and young floral primordia. Detected in the floral meristems and at the base of the floral organs.

It catalyses the reaction indole-3-pyruvate + NADPH + O2 + H(+) = (indol-3-yl)acetate + CO2 + NADP(+) + H2O. It functions in the pathway plant hormone metabolism; auxin biosynthesis. In terms of biological role, involved in auxin biosynthesis, but not in the tryptamine or the CYP79B2/B3 branches. Catalyzes in vitro the N-oxidation of tryptamine to form N-hydroxyl tryptamine. Involved during embryogenesis and seedling development. Required for the formation of floral organs and vascular tissues. Belongs to the set of redundant YUCCA genes probably responsible for auxin biosynthesis in shoots. In Arabidopsis thaliana (Mouse-ear cress), this protein is Probable indole-3-pyruvate monooxygenase YUCCA1 (YUC1).